Reading from the N-terminus, the 101-residue chain is Small ribosomal subunit protein uS14 (101 aa).

Positions 33–69 are disordered; sequence SQDASYEEKIDASTKLQKLPRDSSPSRHRNRCELSGR. Positions 51–68 are enriched in basic and acidic residues; sequence LPRDSSPSRHRNRCELSG.

It belongs to the universal ribosomal protein uS14 family. In terms of assembly, part of the 30S ribosomal subunit. Contacts proteins S3 and S10.

Functionally, binds 16S rRNA, required for the assembly of 30S particles and may also be responsible for determining the conformation of the 16S rRNA at the A site. The protein is Small ribosomal subunit protein uS14 of Xanthomonas axonopodis pv. citri (strain 306).